Reading from the N-terminus, the 227-residue chain is Phosphoribosylformylglycinamidine synthase subunit PurQ (227 aa).

The Glutamine amidotransferase type-1 domain maps to 3-225 (FAVIVLPGSN…VKNWRETHVA (223 aa)). The Nucleophile role is filled by Cys86. Active-site residues include His194 and Glu196.

Part of the FGAM synthase complex composed of 1 PurL, 1 PurQ and 2 PurS subunits.

It is found in the cytoplasm. The catalysed reaction is N(2)-formyl-N(1)-(5-phospho-beta-D-ribosyl)glycinamide + L-glutamine + ATP + H2O = 2-formamido-N(1)-(5-O-phospho-beta-D-ribosyl)acetamidine + L-glutamate + ADP + phosphate + H(+). The enzyme catalyses L-glutamine + H2O = L-glutamate + NH4(+). Its pathway is purine metabolism; IMP biosynthesis via de novo pathway; 5-amino-1-(5-phospho-D-ribosyl)imidazole from N(2)-formyl-N(1)-(5-phospho-D-ribosyl)glycinamide: step 1/2. Its function is as follows. Part of the phosphoribosylformylglycinamidine synthase complex involved in the purines biosynthetic pathway. Catalyzes the ATP-dependent conversion of formylglycinamide ribonucleotide (FGAR) and glutamine to yield formylglycinamidine ribonucleotide (FGAM) and glutamate. The FGAM synthase complex is composed of three subunits. PurQ produces an ammonia molecule by converting glutamine to glutamate. PurL transfers the ammonia molecule to FGAR to form FGAM in an ATP-dependent manner. PurS interacts with PurQ and PurL and is thought to assist in the transfer of the ammonia molecule from PurQ to PurL. The sequence is that of Phosphoribosylformylglycinamidine synthase subunit PurQ from Bacillus licheniformis (strain ATCC 14580 / DSM 13 / JCM 2505 / CCUG 7422 / NBRC 12200 / NCIMB 9375 / NCTC 10341 / NRRL NRS-1264 / Gibson 46).